A 449-amino-acid chain; its full sequence is MDSDDLQVFQNELICCICVNYFIDPVTIDCGHSFCRPCLCLCSEEGRAPMRCPSCRKISEKPNFNTNVVLKKLSSLARQTRPQNINSSDNICVLHEETKELFCEADKRLLCGPCSESPEHMAHSHSPIGWAAEECREKLIKEMDYLWEINQETRNNLNQETRTFHSLKDYVSVRKRIITIQYQKMPIFLDEEEQRHLQALEREAEELFQQLQDSQVRMTQHLERMKDMYRELWETCHVPDVELLQDVRNVSARTDLAQMQKPQPVNPELTSWCITGVLDMLNNFRVDSALSTEMIPCYISLSEDVRYVIFGDDHLSAPTDPQGVDSFAVWGAQAFTSGKHYWEVDVTLSSNWILGVCQDSRTADANFVIDSDERFFLISSKRSNHYSLSTNSPPLIQYVQRPLGQVGVFLDYDNGSVSFFDVSKGSLIYGFPPSSFSSPLRPFFCFGCT.

The RING-type zinc-finger motif lies at 15–56 (CCICVNYFIDPVTIDCGHSFCRPCLCLCSEEGRAPMRCPSCR). A B box-type zinc finger spans residues 87–128 (SSDNICVLHEETKELFCEADKRLLCGPCSESPEHMAHSHSPI). Positions 92, 95, 114, and 120 each coordinate Zn(2+). Positions 189-225 (LDEEEQRHLQALEREAEELFQQLQDSQVRMTQHLERM) form a coiled coil. The region spanning 269 to 449 (LTSWCITGVL…LRPFFCFGCT (181 aa)) is the B30.2/SPRY domain.

It belongs to the TRIM/RBCC family.

This Homo sapiens (Human) protein is Tripartite motif-containing protein 64 (TRIM64).